The following is a 188-amino-acid chain: Threonylcarbamoyl-AMP synthase (188 aa).

In terms of domain architecture, YrdC-like spans 3–188 (QLHPSDIKDI…RSGKILRNGQ (186 aa)).

It belongs to the SUA5 family. TsaC subfamily.

The protein resides in the cytoplasm. The catalysed reaction is L-threonine + hydrogencarbonate + ATP = L-threonylcarbamoyladenylate + diphosphate + H2O. Its function is as follows. Required for the formation of a threonylcarbamoyl group on adenosine at position 37 (t(6)A37) in tRNAs that read codons beginning with adenine. Catalyzes the conversion of L-threonine, HCO(3)(-)/CO(2) and ATP to give threonylcarbamoyl-AMP (TC-AMP) as the acyladenylate intermediate, with the release of diphosphate. The protein is Threonylcarbamoyl-AMP synthase of Shewanella putrefaciens (strain CN-32 / ATCC BAA-453).